Reading from the N-terminus, the 139-residue chain is ATP synthase epsilon chain, chloroplastic (139 aa).

The protein belongs to the ATPase epsilon chain family. In terms of assembly, F-type ATPases have 2 components, CF(1) - the catalytic core - and CF(0) - the membrane proton channel. CF(1) has five subunits: alpha(3), beta(3), gamma(1), delta(1), epsilon(1). CF(0) has three main subunits: a, b and c.

Its subcellular location is the plastid. The protein localises to the chloroplast thylakoid membrane. Produces ATP from ADP in the presence of a proton gradient across the membrane. This chain is ATP synthase epsilon chain, chloroplastic, found in Welwitschia mirabilis (Tree tumbo).